The primary structure comprises 254 residues: Pimeloyl-[acyl-carrier protein] methyl ester esterase (254 aa).

Residues 14-238 (VVMLHGWGLH…QASHAPFLSH (225 aa)) enclose the AB hydrolase-1 domain. Substrate is bound by residues tryptophan 20, 80–81 (SL), and 142–146 (FLALQ). Catalysis depends on serine 80, which acts as the Nucleophile. Residues aspartate 204 and histidine 232 contribute to the active site. Position 232 (histidine 232) interacts with substrate.

The protein belongs to the AB hydrolase superfamily. Carboxylesterase BioH family. As to quaternary structure, monomer.

It localises to the cytoplasm. The catalysed reaction is 6-carboxyhexanoyl-[ACP] methyl ester + H2O = 6-carboxyhexanoyl-[ACP] + methanol + H(+). Its pathway is cofactor biosynthesis; biotin biosynthesis. In terms of biological role, the physiological role of BioH is to remove the methyl group introduced by BioC when the pimeloyl moiety is complete. It allows to synthesize pimeloyl-ACP via the fatty acid synthetic pathway through the hydrolysis of the ester bonds of pimeloyl-ACP esters. The sequence is that of Pimeloyl-[acyl-carrier protein] methyl ester esterase from Chromobacterium violaceum (strain ATCC 12472 / DSM 30191 / JCM 1249 / CCUG 213 / NBRC 12614 / NCIMB 9131 / NCTC 9757 / MK).